A 303-amino-acid chain; its full sequence is UDP-3-O-acyl-N-acetylglucosamine deacetylase (303 aa).

3 residues coordinate Zn(2+): His-78, His-237, and Asp-241. Residue His-264 is the Proton donor of the active site.

It belongs to the LpxC family. It depends on Zn(2+) as a cofactor.

The catalysed reaction is a UDP-3-O-[(3R)-3-hydroxyacyl]-N-acetyl-alpha-D-glucosamine + H2O = a UDP-3-O-[(3R)-3-hydroxyacyl]-alpha-D-glucosamine + acetate. Its pathway is glycolipid biosynthesis; lipid IV(A) biosynthesis; lipid IV(A) from (3R)-3-hydroxytetradecanoyl-[acyl-carrier-protein] and UDP-N-acetyl-alpha-D-glucosamine: step 2/6. Catalyzes the hydrolysis of UDP-3-O-myristoyl-N-acetylglucosamine to form UDP-3-O-myristoylglucosamine and acetate, the committed step in lipid A biosynthesis. This chain is UDP-3-O-acyl-N-acetylglucosamine deacetylase, found in Coxiella burnetii (strain CbuG_Q212) (Coxiella burnetii (strain Q212)).